The chain runs to 145 residues: CASP-like protein SELMODRAFT_406854 (145 aa).

Topologically, residues 1–31 (MGVASQSSVANEAGAAPEASIQQTLRGFSSP) are cytoplasmic. Residues 32–52 (TSLLLRIATAVLCTLTLAFLV) form a helical membrane-spanning segment. Over 53-75 (TSKERKEIASIDIVAIWSNSKAL) the chain is Extracellular. The helical transmembrane segment at 76-96 (IFLAVVSGICLGYSLLHAAVF) threads the bilayer. Over 97 to 112 (LVMLSGNRKPLARKKA) the chain is Cytoplasmic. Residues 113–133 (LDWMVFLADQVFFKIFCWFSI) form a helical membrane-spanning segment. Topologically, residues 134-145 (RVSSRRSKAGFV) are extracellular.

This sequence belongs to the Casparian strip membrane proteins (CASP) family. As to quaternary structure, homodimer and heterodimers.

It is found in the cell membrane. This Selaginella moellendorffii (Spikemoss) protein is CASP-like protein SELMODRAFT_406854.